The following is a 207-amino-acid chain: 3-demethoxyubiquinol 3-hydroxylase (207 aa).

The Fe cation site is built by Glu-56, Glu-86, His-89, Glu-138, Glu-170, and His-173.

Belongs to the COQ7 family. Fe cation serves as cofactor.

It is found in the cell membrane. It catalyses the reaction a 5-methoxy-2-methyl-3-(all-trans-polyprenyl)benzene-1,4-diol + AH2 + O2 = a 3-demethylubiquinol + A + H2O. The protein operates within cofactor biosynthesis; ubiquinone biosynthesis. Its function is as follows. Catalyzes the hydroxylation of 2-nonaprenyl-3-methyl-6-methoxy-1,4-benzoquinol during ubiquinone biosynthesis. The polypeptide is 3-demethoxyubiquinol 3-hydroxylase (Cupriavidus necator (strain ATCC 17699 / DSM 428 / KCTC 22496 / NCIMB 10442 / H16 / Stanier 337) (Ralstonia eutropha)).